The primary structure comprises 600 residues: Forkhead box protein O (600 aa).

Position 49 is a phosphothreonine; by PKB/AKT1 (Thr-49). Ser-80 carries the phosphoserine modification. Residues 100–206 (WGNLSYADLI…ETSRYEKRRG (107 aa)) constitute a DNA-binding region (fork-head). 4 disordered regions span residues 187–210 (KSVRRRAASMETSRYEKRRGRAKK), 222–283 (GLND…LEPD), 319–364 (QQGF…TPGY), and 580–600 (LNARVQYSQPSVVTSPPSWVH). Residue Ser-195 is modified to Phosphoserine; by PKB/AKT1. Polar residues-rich tracts occupy residues 226-235 (ATPSPSSSVS) and 261-270 (RASSNASSCG). Ser-264 is subject to Phosphoserine; by PKB/AKT1. Residues Ser-267, Ser-268, and Ser-273 each carry the phosphoserine modification. Positions 330-342 (TQPPPPPYQPPQP) are enriched in pro residues. Residues 343 to 354 (QQQQQQGQQPSP) show a composition bias toward low complexity.

Interacts with melt.

It is found in the cytoplasm. The protein resides in the nucleus. Its function is as follows. Transcription factor involved in the regulation of the insulin signaling pathway. Consistently activates both the downstream target Thor\d4EBP and the feedback control target InR. Involved in negative regulation of the cell cycle, modulating cell growth and proliferation. In response to cellular stresses, such as nutrient deprivation or increased levels of reactive oxygen species, foxo is activated and inhibits growth through the action of target genes such as Thor. Foxo activated in the adult fat body can regulate lifespan in adults; an insulin peptide itself may function as one secondary messenger of insulin-regulated aging. Also regulates Lip4, homolog of human acid lipases, thereby acting as a key modulator of lipid metabolism by insulin signaling and integrates insulin responses to glucose and lipid homeostasis. This is Forkhead box protein O from Drosophila ananassae (Fruit fly).